A 469-amino-acid chain; its full sequence is ATP synthase subunit beta (469 aa).

155 to 162 contacts ATP; the sequence is GGAGVGKT.

It belongs to the ATPase alpha/beta chains family. In terms of assembly, F-type ATPases have 2 components, CF(1) - the catalytic core - and CF(0) - the membrane proton channel. CF(1) has five subunits: alpha(3), beta(3), gamma(1), delta(1), epsilon(1). CF(0) has three main subunits: a(1), b(2) and c(9-12). The alpha and beta chains form an alternating ring which encloses part of the gamma chain. CF(1) is attached to CF(0) by a central stalk formed by the gamma and epsilon chains, while a peripheral stalk is formed by the delta and b chains.

It is found in the cell inner membrane. The catalysed reaction is ATP + H2O + 4 H(+)(in) = ADP + phosphate + 5 H(+)(out). In terms of biological role, produces ATP from ADP in the presence of a proton gradient across the membrane. The catalytic sites are hosted primarily by the beta subunits. This is ATP synthase subunit beta from Helicobacter pylori (strain ATCC 700392 / 26695) (Campylobacter pylori).